A 358-amino-acid polypeptide reads, in one-letter code: Alanine racemase (358 aa).

The Proton acceptor; specific for D-alanine role is filled by lysine 35. Lysine 35 bears the N6-(pyridoxal phosphate)lysine mark. Arginine 130 contributes to the substrate binding site. Tyrosine 255 acts as the Proton acceptor; specific for L-alanine in catalysis. A substrate-binding site is contributed by methionine 303.

It belongs to the alanine racemase family. Pyridoxal 5'-phosphate serves as cofactor.

It carries out the reaction L-alanine = D-alanine. The protein operates within amino-acid biosynthesis; D-alanine biosynthesis; D-alanine from L-alanine: step 1/1. Its function is as follows. Catalyzes the interconversion of L-alanine and D-alanine. May also act on other amino acids. The polypeptide is Alanine racemase (alr) (Shewanella sp. (strain ANA-3)).